A 482-amino-acid polypeptide reads, in one-letter code: GTPase Obg (482 aa).

Positions 2–159 constitute an Obg domain; that stretch reads PRFVDRVVIH…VDLTLELKTV (158 aa). The OBG-type G domain maps to 160 to 340; sequence ADVGLVGFPS…LTFALWEMIV (181 aa). Residues 166–173, 191–195, 212–215, 292–295, and 321–323 contribute to the GTP site; these read GFPSAGKS, FTTLV, DVPG, NKVD, and STL. Serine 173 and threonine 193 together coordinate Mg(2+). The 81-residue stretch at 358 to 438 folds into the OCT domain; it reads PIPVDESGFT…IGDMTFDWEP (81 aa). A disordered region spans residues 441 to 482; sequence PAGVDVTMSGRGTDARIDKTDRVGAAERRQARRVRRGQVEPE. Residues 453 to 469 are compositionally biased toward basic and acidic residues; that stretch reads TDARIDKTDRVGAAERR.

Belongs to the TRAFAC class OBG-HflX-like GTPase superfamily. OBG GTPase family. As to quaternary structure, monomer. Mg(2+) is required as a cofactor.

It is found in the cytoplasm. An essential GTPase which binds GTP, GDP and possibly (p)ppGpp with moderate affinity, with high nucleotide exchange rates and a fairly low GTP hydrolysis rate. Plays a role in control of the cell cycle, stress response, ribosome biogenesis and in those bacteria that undergo differentiation, in morphogenesis control. The chain is GTPase Obg from Mycobacteroides abscessus (strain ATCC 19977 / DSM 44196 / CCUG 20993 / CIP 104536 / JCM 13569 / NCTC 13031 / TMC 1543 / L948) (Mycobacterium abscessus).